The sequence spans 593 residues: Uncoordinated protein 58 (593 aa).

The next 6 membrane-spanning stretches (helical) occupy residues 186–206 (VILVSVLIGYLCLGAWILMLL), 291–311 (TFPTALLYVLTVLTTCGYGEV), 320–340 (VFSVAFALVGIPLMFITAADI), 402–422 (PIGAYVSCICLYCSMGSAMFI), 430–450 (FIHAFHFGFNLIVTVGLGDIV), and 455–475 (IFLSLIVAFVIVGLSVVTMCV).

This sequence belongs to the two pore domain potassium channel (TC 1.A.1.8) family.

The protein localises to the membrane. In terms of biological role, has a role in mobility, possibly in the transport of potassium in muscles. This Caenorhabditis briggsae protein is Uncoordinated protein 58.